The primary structure comprises 84 residues: Defensin-like protein 140 (84 aa).

The N-terminal stretch at 1-28 is a signal peptide; that stretch reads MSKSLQLIVTVLCIFTILVLGEICLAKG. Cystine bridges form between cysteine 37-cysteine 81, cysteine 46-cysteine 65, cysteine 51-cysteine 75, and cysteine 55-cysteine 77.

Belongs to the DEFL family.

The protein resides in the secreted. The protein is Defensin-like protein 140 (LCR15) of Arabidopsis thaliana (Mouse-ear cress).